The primary structure comprises 257 residues: Diacetyl reductase [(S)-acetoin forming] (257 aa).

6–30 (IITGSAGGLGKGIAERLANDGFNIV) provides a ligand contact to NAD(+). S139 serves as a coordination point for substrate. Y152 acts as the Proton acceptor in catalysis. The active site involves K156.

This sequence belongs to the short-chain dehydrogenases/reductases (SDR) family.

The enzyme catalyses (S)-acetoin + NAD(+) = diacetyl + NADH + H(+). In terms of biological role, catalyzes the irreversible reduction of 2,3-butanediol to (S)-acetoin in the presence of NADH. This Staphylococcus epidermidis (strain ATCC 35984 / DSM 28319 / BCRC 17069 / CCUG 31568 / BM 3577 / RP62A) protein is Diacetyl reductase [(S)-acetoin forming] (butA).